We begin with the raw amino-acid sequence, 585 residues long: Arginine--tRNA ligase (585 aa).

The 'HIGH' region signature appears at Pro-126 to His-136.

The protein belongs to the class-I aminoacyl-tRNA synthetase family. Monomer.

The protein resides in the cytoplasm. It catalyses the reaction tRNA(Arg) + L-arginine + ATP = L-arginyl-tRNA(Arg) + AMP + diphosphate. This chain is Arginine--tRNA ligase, found in Trichodesmium erythraeum (strain IMS101).